The chain runs to 770 residues: Amyloid-beta precursor protein (770 aa).

An N-terminal signal peptide occupies residues 1–17 (MLPGLALLLLAAWTARA). At 18–701 (LEVPTDGNAG…AEDVGSNKGA (684 aa)) the chain is on the extracellular side. The GFLD subdomain stretch occupies residues 28–123 (LLAEPQIAMF…PYRCLVGEFV (96 aa)). The E1 domain maps to 28-189 (LLAEPQIAMF…RGVEFVCCPL (162 aa)). Cystine bridges form between Cys38–Cys62, Cys73–Cys117, Cys98–Cys105, Cys133–Cys187, Cys144–Cys174, and Cys158–Cys186. 96 to 110 (NWCKRGRKQCKTHPH) contributes to the heparin binding site. The segment at 131-189 (DKCKFLHQERMDVCETHLHWHTVAKETCSEKSTNLHDYGMLLPCGIDKFRGVEFVCCPL) is cuBD subdomain. Cu(2+)-binding residues include His147, His151, and Tyr168. Positions 181 to 188 (GVEFVCCP) are zinc-binding. Positions 183, 186, and 187 each coordinate Zn(2+). Acidic residues predominate over residues 194-207 (DNVDSADAEEDDSD). Residues 194–284 (DNVDSADAEE…TTTTTTESVE (91 aa)) form a disordered region. Residue Ser198 is modified to Phosphoserine; by CK2. A Phosphoserine; by CK1 modification is found at Ser206. Sulfotyrosine is present on residues Tyr217 and Tyr262. Positions 228-264 (VAEEEEVAEVEEEEADDDEDDEDGDEVEEEAEEPYEE) are enriched in acidic residues. Low complexity predominate over residues 268–281 (RTTSIATTTTTTTE). 3 disulfides stabilise this stretch: Cys291/Cys341, Cys300/Cys324, and Cys316/Cys337. Residues 291 to 341 (CSEQAETGPCRAMISRWYFDVTEGKCAPFFYGGCGGNRNNFDTEEYCMAVC) enclose the BPTI/Kunitz inhibitor domain. Sulfotyrosine is present on Tyr336. An OX-2 motif is present at residues 344-365 (VMSQSLLKTTQEPLARDPVKLP). Residues 374-565 (AVDKYLETPG…EEIQDEVDEL (192 aa)) enclose the E2 domain. The interval 391–423 (FQKAKERLEAKHRERMSQVMREWEEAERQAKNL) is heparin-binding. A Phosphoserine modification is found at Ser441. The interval 491-522 (FNMLKKYVRAEQKDRQHTLKHFEHVRMVDPKK) is heparin-binding. Tyr497 is modified (phosphotyrosine). Residues 523–540 (AAQIRSQVMTHLRVIYER) are collagen-binding. N-linked (GlcNAc...) asparagine glycosylation is found at Asn542 and Asn571. Positions 677, 681, 684, and 685 each coordinate Cu(2+). Positions 677, 681, 684, and 685 each coordinate Zn(2+). Residues 695–722 (VGSNKGAIIGLMVGGVVIATVIVITLVM) form an interaction with PSEN1 region. The helical transmembrane segment at 702 to 722 (IIGLMVGGVVIATVIVITLVM) threads the bilayer. Over 723–770 (LKKKQYTSIHHGVVEVDAAVTPEERHLSKMQQNGYENPTYKFFEQMQN) the chain is Cytoplasmic. Residues 724–734 (KKKQYTSIHHG) carry the Basolateral sorting signal motif. Position 729 is a phosphothreonine (Thr729). The residue at position 730 (Ser730) is a Phosphoserine; by APP-kinase I. An interaction with G(o)-alpha region spans residues 732-751 (HHGVVEVDAAVTPEERHLSK). At Thr743 the chain carries Phosphothreonine; by CDK5 and MAPK10. A required for the interaction with KIF5B and for anterograde transport in axons region spans residues 756-770 (GYENPTYKFFEQMQN). A Phosphotyrosine; by ABL1 modification is found at Tyr757. The YENPXY motif; contains endocytosis signal signature appears at 757 to 762 (YENPTY). Lys763 is covalently cross-linked (Glycyl lysine isopeptide (Lys-Gly) (interchain with G-Cter in ubiquitin)).

Belongs to the APP family. As to quaternary structure, binds, via its C-terminus, to the PID domain of several cytoplasmic proteins, including APBB family members, the APBA family, MAPK8IP1, SHC1 and NUMB and DAB1. Binding to DAB1 inhibits its serine phosphorylation. Interacts (via NPXY motif) with DAB2 (via PID domain); the interaction is impaired by tyrosine phosphorylation of the NPXY motif. Also interacts with GPCR-like protein BPP, APPBP1, IB1, KNS2 (via its TPR domains), APPBP2 (via BaSS) and DDB1. In vitro, it binds MAPT via the MT-binding domains. Associates with microtubules in the presence of ATP and in a kinesin-dependent manner. Interacts, through a C-terminal domain, with GNAO1. Amyloid-beta protein 42 binds CHRNA7 in hippocampal neurons. Amyloid-beta associates with HADH2. Interacts with CPEB1, ANKS1B and AGER. Interacts with ITM2B. Interacts with ITM2C. Interacts with IDE. Can form homodimers; dimerization is enhanced in the presence of Cu(2+) ions. Can form homodimers; this is promoted by heparin binding. Amyloid-beta protein 40 interacts with S100A9. CTF-alpha product of APP interacts with GSAP. Interacts with SORL1 (via N-terminal ectodomain); this interaction retains APP in the trans-Golgi network and reduces processing into soluble APP-alpha and amyloid-beta peptides. The C99 fragment also interacts with SORL1. Interacts with PLD3. Interacts with VDAC1. Interacts with NSG1; could regulate APP processing. Amyloid-beta protein 42 interacts with FPR2. Interacts (via transmembrane region) with PSEN1; the interaction is direct. Interacts with LRRK2. Interacts (via cytoplasmic domain) with KIF5B. Interacts (via C-terminus) with APBB2/FE65L1 (via C-terminus). Interacts (via intracellular domain) with APBB3. Post-translationally, proteolytically processed under normal cellular conditions. Cleavage either by alpha-secretase, beta-secretase or theta-secretase leads to generation and extracellular release of soluble APP peptides, S-APP-alpha and S-APP-beta, and the retention of corresponding membrane-anchored C-terminal fragments, C80, C83 and C99. Subsequent processing of C80 and C83 by gamma-secretase yields P3 peptides. This is the major secretory pathway and is non-amyloidogenic. Alternatively, presenilin/nicastrin-mediated gamma-secretase processing of C99 releases the amyloid-beta proteins, amyloid-beta protein 40 and amyloid-beta protein 42, major components of amyloid plaques, and the cytotoxic C-terminal fragments, gamma-CTF(50), gamma-CTF(57) and gamma-CTF(59). PSEN1 cleavage is more efficient with C83 than with C99 as substrate (in vitro). Amyloid-beta protein 40 and Amyloid-beta protein 42 are cleaved by ACE. Many other minor amyloid-beta peptides, amyloid-beta 1-X peptides, are found in cerebral spinal fluid (CSF) including the amyloid-beta X-15 peptides, produced from the cleavage by alpha-secretase. In terms of processing, proteolytically cleaved by caspases during neuronal apoptosis. Cleavage at Asp-739 by either caspase-3, -8 or -9 results in the production of the neurotoxic C31 peptide and the increased production of amyloid-beta peptides. N- and O-glycosylated. Post-translationally, phosphorylation in the C-terminal on tyrosine, threonine and serine residues is neuron-specific. Phosphorylation can affect APP processing, neuronal differentiation and interaction with other proteins. Phosphorylated on Thr-743 in neuronal cells by Cdc5 kinase and Mapk10, in dividing cells by Cdc2 kinase in a cell-cycle dependent manner with maximal levels at the G2/M phase and, in vitro, by GSK-3-beta. The Thr-743 phosphorylated form causes a conformational change which reduces binding of Fe65 family members. In dopaminergic (DA) neurons, phosphorylation on Thr-743 by LRKK2 promotes the production and the nuclear translocation of the APP intracellular domain (AICD) which induces DA neuron apoptosis. Phosphorylation on Tyr-757 is required for SHC binding. Phosphorylated in the extracellular domain by casein kinases on both soluble and membrane-bound APP. This phosphorylation is inhibited by heparin. In terms of processing, trophic-factor deprivation triggers the cleavage of surface APP by beta-secretase to release sAPP-beta which is further cleaved to release an N-terminal fragment of APP (N-APP). Amyloid-beta peptides are degraded by IDE. Post-translationally, sulfated on tyrosine residues.

Its subcellular location is the cell membrane. The protein resides in the membrane. It localises to the perikaryon. It is found in the cell projection. The protein localises to the growth cone. Its subcellular location is the clathrin-coated pit. The protein resides in the early endosome. It localises to the cytoplasmic vesicle. It is found in the endoplasmic reticulum. The protein localises to the golgi apparatus. Its subcellular location is the secreted. The protein resides in the cell surface. It localises to the nucleus. It is found in the cytoplasm. Functions as a cell surface receptor and performs physiological functions on the surface of neurons relevant to neurite growth, neuronal adhesion and axonogenesis. Interaction between APP molecules on neighboring cells promotes synaptogenesis. Involved in cell mobility and transcription regulation through protein-protein interactions. Can promote transcription activation through binding to APBB1-KAT5 and inhibit Notch signaling through interaction with Numb. Couples to apoptosis-inducing pathways such as those mediated by G(o) and JIP. Inhibits G(o)-alpha ATPase activity. Acts as a kinesin I membrane receptor, mediating the axonal transport of beta-secretase and presenilin 1. By acting as a kinesin I membrane receptor, plays a role in axonal anterograde transport of cargo towards synapses in axons. May be involved in copper homeostasis/oxidative stress through copper ion reduction. In vitro, copper-metallated APP induces neuronal death directly or is potentiated through Cu(2+)-mediated low-density lipoprotein oxidation. Can regulate neurite outgrowth through binding to components of the extracellular matrix such as heparin and collagen I and IV. Induces a AGER-dependent pathway that involves activation of p38 MAPK, resulting in internalization of amyloid-beta peptide and mitochondrial dysfunction in cultured cortical neurons. Provides Cu(2+) ions for GPC1 which are required for release of nitric oxide (NO) and subsequent degradation of the heparan sulfate chains on GPC1. Its function is as follows. Amyloid-beta peptides are lipophilic metal chelators with metal-reducing activity. Binds transient metals such as copper, zinc and iron. Functionally, the gamma-CTF peptides as well as the caspase-cleaved peptides, including C31, are potent enhancers of neuronal apoptosis. This chain is Amyloid-beta precursor protein, found in Pan troglodytes (Chimpanzee).